The primary structure comprises 198 residues: N-acetyltransferase 9-like protein (198 aa).

An N-acetyltransferase domain is found at 14–186; sequence IILVPYKEKH…SNNFTNLTAD (173 aa).

It belongs to the acetyltransferase family. GNAT subfamily.

The chain is N-acetyltransferase 9-like protein (nat9) from Nematostella vectensis (Starlet sea anemone).